The primary structure comprises 591 residues: Oxaloacetate decarboxylase alpha chain (591 aa).

The Pyruvate carboxyltransferase domain maps to 3-263 (IAITDVVLRD…DTGLDILKLE (261 aa)). In terms of domain architecture, Biotinyl-binding spans 518 to 591 (PAGAGTPVTA…SVGDTLMTLA (74 aa)). Position 557 is an N6-biotinyllysine (Lys-557).

Composed of three chains (alpha, beta, and gamma). Biotin is required as a cofactor.

The catalysed reaction is oxaloacetate + 2 Na(+)(in) + H(+) = pyruvate + 2 Na(+)(out) + CO2. Catalyzes the decarboxylation of oxaloacetate coupled to Na(+) translocation. The protein is Oxaloacetate decarboxylase alpha chain (oadA1) of Salmonella typhimurium (strain LT2 / SGSC1412 / ATCC 700720).